We begin with the raw amino-acid sequence, 146 residues long: D-aminoacyl-tRNA deacylase (146 aa).

The Gly-cisPro motif, important for rejection of L-amino acids signature appears at 137-138; that stretch reads GP.

This sequence belongs to the DTD family. In terms of assembly, homodimer.

The protein resides in the cytoplasm. The enzyme catalyses glycyl-tRNA(Ala) + H2O = tRNA(Ala) + glycine + H(+). It carries out the reaction a D-aminoacyl-tRNA + H2O = a tRNA + a D-alpha-amino acid + H(+). In terms of biological role, an aminoacyl-tRNA editing enzyme that deacylates mischarged D-aminoacyl-tRNAs. Also deacylates mischarged glycyl-tRNA(Ala), protecting cells against glycine mischarging by AlaRS. Acts via tRNA-based rather than protein-based catalysis; rejects L-amino acids rather than detecting D-amino acids in the active site. By recycling D-aminoacyl-tRNA to D-amino acids and free tRNA molecules, this enzyme counteracts the toxicity associated with the formation of D-aminoacyl-tRNA entities in vivo and helps enforce protein L-homochirality. The protein is D-aminoacyl-tRNA deacylase of Bacillus cereus (strain Q1).